A 179-amino-acid chain; its full sequence is Large ribosomal subunit protein uL5 (179 aa).

It belongs to the universal ribosomal protein uL5 family. As to quaternary structure, part of the 50S ribosomal subunit; part of the 5S rRNA/L5/L18/L25 subcomplex. Contacts the 5S rRNA and the P site tRNA. Forms a bridge to the 30S subunit in the 70S ribosome.

This is one of the proteins that bind and probably mediate the attachment of the 5S RNA into the large ribosomal subunit, where it forms part of the central protuberance. In the 70S ribosome it contacts protein S13 of the 30S subunit (bridge B1b), connecting the 2 subunits; this bridge is implicated in subunit movement. Contacts the P site tRNA; the 5S rRNA and some of its associated proteins might help stabilize positioning of ribosome-bound tRNAs. In Listeria innocua serovar 6a (strain ATCC BAA-680 / CLIP 11262), this protein is Large ribosomal subunit protein uL5.